Here is a 525-residue protein sequence, read N- to C-terminus: ESX-1 secretion-associated protein EspE (525 aa).

2 disordered regions span residues 244–341 (AVAG…PGAA) and 375–494 (ALQA…APVH). Acidic residues predominate over residues 248 to 258 (DADDTTADDTA). The segment covering 274-286 (ETSKEDGQSRHEN) has biased composition (basic and acidic residues). The span at 292–306 (SGGGGGATSGGGGGA) shows a compositional bias: gly residues. Composition is skewed to low complexity over residues 307–319 (PSSASSAGPAGTP), 332–341 (TPTDAQPGAA), and 375–397 (ALQAATQAGAQAAQLAGQAAAAP). The segment covering 411–440 (DPDAEGDKDSDKRDGEGKEDGTAPRDREST) has biased composition (basic and acidic residues).

It is found in the cytoplasm. This is ESX-1 secretion-associated protein EspE from Mycolicibacterium smegmatis (strain ATCC 700084 / mc(2)155) (Mycobacterium smegmatis).